A 186-amino-acid polypeptide reads, in one-letter code: Negative modulator of initiation of replication (186 aa).

The protein belongs to the SeqA family. As to quaternary structure, homodimer. Polymerizes to form helical filaments.

It is found in the cytoplasm. In terms of biological role, negative regulator of replication initiation, which contributes to regulation of DNA replication and ensures that replication initiation occurs exactly once per chromosome per cell cycle. Binds to pairs of hemimethylated GATC sequences in the oriC region, thus preventing assembly of replication proteins and re-initiation at newly replicated origins. Repression is relieved when the region becomes fully methylated. The sequence is that of Negative modulator of initiation of replication from Glaesserella parasuis serovar 5 (strain SH0165) (Haemophilus parasuis).